The primary structure comprises 312 residues: R2-like ligand binding oxidase (312 aa).

Positions 68, 101, and 104 each coordinate Mn(2+). A cross-link (3-(O4'-tyrosyl)-valine (Val-Tyr)) is located at residues 71–162; sequence VTQDIQPFMA…AAQVRASATY (92 aa). Residue Glu101 participates in Fe cation binding. Fe cation-binding residues include Glu167, Glu202, and His205.

The protein belongs to the ribonucleoside diphosphate reductase small chain family. R2-like ligand binding oxidase subfamily. As to quaternary structure, homodimer. Fe cation serves as cofactor. The cofactor is Mn(2+).

Probable oxidase that might be involved in lipid metabolism. The polypeptide is R2-like ligand binding oxidase (Mycobacterium sp. (strain KMS)).